The primary structure comprises 70 residues: MLVFYALLFVSVFSSTVMGATIDKPILREAIEEIDVNKRAKNPYCKEENCPPGKHCPKVPIACVYGPCCF.

An N-terminal signal peptide occupies residues M1–G19. Positions A20–R39 are excised as a propeptide.

This sequence belongs to the scoloptoxin-07 family. Contains 3 disulfide bonds. Expressed by the venom gland.

The protein localises to the secreted. Its function is as follows. Inhibits voltage-gated potassium channels. The polypeptide is Kappa-scoloptoxin(07)-Ssm2b (Scolopendra mutilans (Chinese red-headed centipede)).